We begin with the raw amino-acid sequence, 296 residues long: Acetylglutamate kinase (296 aa).

Residues 69 to 70 (GG), Arg-91, and Asn-193 contribute to the substrate site.

The protein belongs to the acetylglutamate kinase family. ArgB subfamily.

The protein localises to the cytoplasm. The enzyme catalyses N-acetyl-L-glutamate + ATP = N-acetyl-L-glutamyl 5-phosphate + ADP. The protein operates within amino-acid biosynthesis; L-arginine biosynthesis; N(2)-acetyl-L-ornithine from L-glutamate: step 2/4. Catalyzes the ATP-dependent phosphorylation of N-acetyl-L-glutamate. In Paracidovorax citrulli (strain AAC00-1) (Acidovorax citrulli), this protein is Acetylglutamate kinase.